The following is a 298-amino-acid chain: Porphobilinogen deaminase (298 aa).

Cys-242 carries the S-(dipyrrolylmethanemethyl)cysteine modification.

This sequence belongs to the HMBS family. As to quaternary structure, monomer. Dipyrromethane is required as a cofactor.

The catalysed reaction is 4 porphobilinogen + H2O = hydroxymethylbilane + 4 NH4(+). Its pathway is porphyrin-containing compound metabolism; protoporphyrin-IX biosynthesis; coproporphyrinogen-III from 5-aminolevulinate: step 2/4. Functionally, tetrapolymerization of the monopyrrole PBG into the hydroxymethylbilane pre-uroporphyrinogen in several discrete steps. This is Porphobilinogen deaminase from Fusobacterium nucleatum subsp. nucleatum (strain ATCC 25586 / DSM 15643 / BCRC 10681 / CIP 101130 / JCM 8532 / KCTC 2640 / LMG 13131 / VPI 4355).